The sequence spans 331 residues: Protein RecA (331 aa).

61-68 (GPESSGKT) serves as a coordination point for ATP.

It belongs to the RecA family.

The protein localises to the cytoplasm. Functionally, can catalyze the hydrolysis of ATP in the presence of single-stranded DNA, the ATP-dependent uptake of single-stranded DNA by duplex DNA, and the ATP-dependent hybridization of homologous single-stranded DNAs. It interacts with LexA causing its activation and leading to its autocatalytic cleavage. This is Protein RecA from Mycoplasma mobile (strain ATCC 43663 / 163K / NCTC 11711) (Mesomycoplasma mobile).